Reading from the N-terminus, the 192-residue chain is NAD(P)H-quinone oxidoreductase subunit J, organellar chromatophore (192 aa).

This sequence belongs to the complex I 30 kDa subunit family. In terms of assembly, NDH is composed of at least 16 different subunits, 5 of which are encoded in the nucleus.

It is found in the plastid. The protein localises to the organellar chromatophore thylakoid membrane. It carries out the reaction a quinone + NADH + H(+) = a quinol + NAD(+). NDH-1 shuttles electrons from NADH, via FMN and iron-sulfur (Fe-S) centers, to quinones in the respiratory chain. Couples the redox reaction to proton translocation (for every two electrons transferred, four hydrogen ions are translocated across the cytoplasmic membrane), and thus conserves the redox energy in a proton gradient. In Paulinella chromatophora, this protein is NAD(P)H-quinone oxidoreductase subunit J, organellar chromatophore.